The chain runs to 93 residues: Ferredoxin-2 (93 aa).

Residues 2-91 (YKVTLKTPDG…DVVIETHKED (90 aa)) enclose the 2Fe-2S ferredoxin-type domain. Residues Cys-37, Cys-42, Cys-45, and Cys-75 each coordinate [2Fe-2S] cluster.

This sequence belongs to the 2Fe2S plant-type ferredoxin family. [2Fe-2S] cluster is required as a cofactor.

It is found in the plastid. Its subcellular location is the chloroplast. Functionally, ferredoxins are iron-sulfur proteins that transfer electrons in a wide variety of metabolic reactions. This chain is Ferredoxin-2, found in Equisetum telmateia (Great horsetail).